Here is a 610-residue protein sequence, read N- to C-terminus: Autophagy-related protein 22-1 (610 aa).

Positions 1–29 (MIFTSTPPAPPPADAQQRQPRYPGEDTTP) are disordered. Residues 41–61 (YGIAAEVFAVCGVGSFLPLTL) form a helical membrane-spanning segment. An N-linked (GlcNAc...) asparagine glycan is attached at Asn90. 3 helical membrane-spanning segments follow: residues 120–140 (SFAM…LISF), 153–173 (LLLT…FISP), and 177–197 (ILGA…FVVL). The tract at residues 216 to 242 (KTEGEELPHLDSSGEYTRSGSFNRGDN) is disordered. The segment covering 229–239 (GEYTRSGSFNR) has biased composition (polar residues). 4 helical membrane passes run 277–297 (GVGL…LLLF), 310–330 (TLPL…FTVV), 379–399 (VVIF…VSGT), and 415–435 (VGLL…LWPV). Asn445 carries N-linked (GlcNAc...) asparagine glycosylation. A run of 4 helical transmembrane segments spans residues 450–470 (LCIA…IPLV), 485–507 (FPLG…SFFG), 527–547 (KGSS…TGQV), and 550–570 (GFFF…MVNA). The disordered stretch occupies residues 586–610 (KSHGENSSEFGHPSEEAEGLLARNP). Asn591 carries an N-linked (GlcNAc...) asparagine glycan.

This sequence belongs to the ATG22 family.

It is found in the vacuole membrane. Its function is as follows. Vacuolar effluxer which mediate the efflux of amino acids resulting from autophagic degradation. The release of autophagic amino acids allows the maintenance of protein synthesis and viability during nitrogen starvation. The sequence is that of Autophagy-related protein 22-1 (atg22-1) from Aspergillus clavatus (strain ATCC 1007 / CBS 513.65 / DSM 816 / NCTC 3887 / NRRL 1 / QM 1276 / 107).